The primary structure comprises 179 residues: Large ribosomal subunit protein uL5 (179 aa).

It belongs to the universal ribosomal protein uL5 family. Part of the 50S ribosomal subunit; part of the 5S rRNA/L5/L18/L25 subcomplex. Contacts the 5S rRNA and the P site tRNA. Forms a bridge to the 30S subunit in the 70S ribosome.

Its function is as follows. This is one of the proteins that bind and probably mediate the attachment of the 5S RNA into the large ribosomal subunit, where it forms part of the central protuberance. In the 70S ribosome it contacts protein S13 of the 30S subunit (bridge B1b), connecting the 2 subunits; this bridge is implicated in subunit movement. Contacts the P site tRNA; the 5S rRNA and some of its associated proteins might help stabilize positioning of ribosome-bound tRNAs. The polypeptide is Large ribosomal subunit protein uL5 (Vibrio atlanticus (strain LGP32) (Vibrio splendidus (strain Mel32))).